An 84-amino-acid chain; its full sequence is Large ribosomal subunit protein bL27 (84 aa).

Residues 1-20 form a disordered region; the sequence is MAHKKGGGSTKNGRDSNPKY.

This sequence belongs to the bacterial ribosomal protein bL27 family.

This Chlorobaculum tepidum (strain ATCC 49652 / DSM 12025 / NBRC 103806 / TLS) (Chlorobium tepidum) protein is Large ribosomal subunit protein bL27.